A 506-amino-acid chain; its full sequence is Maturase K (506 aa).

Belongs to the intron maturase 2 family. MatK subfamily.

Its subcellular location is the plastid. It is found in the chloroplast. Usually encoded in the trnK tRNA gene intron. Probably assists in splicing its own and other chloroplast group II introns. The sequence is that of Maturase K from Gaultheria procumbens (Wintergreen).